The sequence spans 508 residues: Aromatase (508 aa).

Cysteine 437 contacts heme.

The protein belongs to the cytochrome P450 family. Heme serves as cofactor.

It is found in the membrane. The catalysed reaction is testosterone + 3 reduced [NADPH--hemoprotein reductase] + 3 O2 = 17beta-estradiol + formate + 3 oxidized [NADPH--hemoprotein reductase] + 4 H2O + 4 H(+). It carries out the reaction androst-4-ene-3,17-dione + 3 reduced [NADPH--hemoprotein reductase] + 3 O2 = estrone + formate + 3 oxidized [NADPH--hemoprotein reductase] + 4 H2O + 4 H(+). Its function is as follows. Catalyzes the formation of aromatic C18 estrogens from C19 androgens. This is Aromatase (Cyp19a1) from Rattus norvegicus (Rat).